Consider the following 431-residue polypeptide: Growth-regulating factor 9 (431 aa).

The 36-residue stretch at 24-59 (WMKAAQLMEFRMQALVYRYIEAGLRVPHHLVVPIWN) folds into the QLQ domain. 2 WRC domains span residues 89-133 (ETEP…LVES) and 307-351 (DNEP…VDTT). Short sequence motifs (bipartite nuclear localization signal) lie at residues 94-104 (RCRRTDGKKWR), 122-129 (RGRKRSRK), 312-322 (RCRRTDGKKWR), and 340-345 (RGMKKK).

It belongs to the GRF family. In terms of assembly, interacts with GIF1. Detected in the shoot apical meristem (SAM) and in young leaf primordium.

It localises to the nucleus. Its function is as follows. Transcription activator that plays a role in the regulation of cell expansion in leaf and cotyledons tissues. Component of a network formed by miR396, the GRFs and their interacting factors (GIFs) acting in the regulation of meristem function, at least partially through the control of cell proliferation. The polypeptide is Growth-regulating factor 9 (GRF9) (Arabidopsis thaliana (Mouse-ear cress)).